A 1405-amino-acid chain; its full sequence is Sterol 3-beta-glucosyltransferase (1405 aa).

Composition is skewed to basic and acidic residues over residues Met1 to Leu16 and Thr95 to Val105. Disordered regions lie at residues Met1 to Arg27, Ala83 to Pro186, and Asp203 to Ser230. Positions Arg106–Thr115 are enriched in polar residues. Positions Ser116–Ser126 are enriched in low complexity. The segment covering Ala206–Glu218 has biased composition (polar residues). A GRAM 1 domain is found at Glu246–Val285. Residues Val285–Phe384 enclose the PH domain. Disordered regions lie at residues Ser461 to Asp526 and Thr566 to Pro642. A compositionally biased stretch (polar residues) spans Arg483–Ala493. Residues Leu570–Ala589 show a composition bias toward basic and acidic residues. The span at Arg590–Gln603 shows a compositional bias: polar residues. Positions Glu606–Thr624 are enriched in basic and acidic residues. Residues Glu626–Pro642 are compositionally biased toward polar residues. Residues Asp724 to Lys790 enclose the GRAM 2 domain. Ser911, Arg912, Asp914, Ala1214, His1216, His1229, Gly1233, Thr1234, Asp1253, and Gln1254 together coordinate UDP-alpha-D-glucose. The tract at residues Ser1330–Asp1367 is disordered. The segment covering Ala1332–Glu1348 has biased composition (low complexity). Over residues Gln1349–Asp1367 the composition is skewed to acidic residues.

The protein belongs to the glycosyltransferase 28 family.

It localises to the cytoplasm. It is found in the preautophagosomal structure membrane. It carries out the reaction a sterol + UDP-alpha-D-glucose = a sterol 3-beta-D-glucoside + UDP + H(+). It catalyses the reaction ergosterol + UDP-alpha-D-glucose = ergosteryl 3-beta-D-glucoside + UDP + H(+). Sterol glycosyltransferase responsible for the glycosylation of ergosterol to form ergosterol-glucoside. This Aspergillus fumigatus (strain ATCC MYA-4609 / CBS 101355 / FGSC A1100 / Af293) (Neosartorya fumigata) protein is Sterol 3-beta-glucosyltransferase.